The primary structure comprises 297 residues: 4-hydroxy-tetrahydrodipicolinate synthase (297 aa).

T50 is a binding site for pyruvate. Y139 acts as the Proton donor/acceptor in catalysis. The active-site Schiff-base intermediate with substrate is the K167. Position 209 (V209) interacts with pyruvate.

The protein belongs to the DapA family. Homotetramer; dimer of dimers.

The protein resides in the cytoplasm. The enzyme catalyses L-aspartate 4-semialdehyde + pyruvate = (2S,4S)-4-hydroxy-2,3,4,5-tetrahydrodipicolinate + H2O + H(+). It functions in the pathway amino-acid biosynthesis; L-lysine biosynthesis via DAP pathway; (S)-tetrahydrodipicolinate from L-aspartate: step 3/4. Its function is as follows. Catalyzes the condensation of (S)-aspartate-beta-semialdehyde [(S)-ASA] and pyruvate to 4-hydroxy-tetrahydrodipicolinate (HTPA). The sequence is that of 4-hydroxy-tetrahydrodipicolinate synthase from Microcystis aeruginosa (strain NIES-843 / IAM M-2473).